Reading from the N-terminus, the 161-residue chain is Pupal cuticle protein C1B (161 aa).

9 repeat units span residues 6–9 (AAPA), 14–17 (AAPA), 35–38 (AAPA), 87–90 (AAPV), 103–106 (AAPV), 112–115 (AAPV), 121–124 (AAPV), 130–133 (AAPV), and 143–146 (AAPA).

Component of the cuticle of the pupa of Tenebrio molitor. The chain is Pupal cuticle protein C1B from Tenebrio molitor (Yellow mealworm beetle).